Reading from the N-terminus, the 2381-residue chain is Highly reducing polyketide synthase virA (2381 aa).

The Ketosynthase family 3 (KS3) domain occupies 1 to 420 (MDALHLACHL…GANGHVILES (420 aa)). Active-site for beta-ketoacyl synthase activity residues include cysteine 171, histidine 306, and histidine 344. The segment at 535–851 (VFTGQGAQYA…PYSPTLVRKE (317 aa)) is malonyl-CoA:ACP transacylase (MAT) domain. Residue serine 629 is the For malonyltransferase activity of the active site. Residues 920–1064 (HELLGTRATA…GSIRVMESTL (145 aa)) form an N-terminal hotdog fold region. The interval 920–1232 (HELLGTRATA…HLRMNEYTGK (313 aa)) is dehydratase (DH) domain. The region spanning 920–1235 (HELLGTRATA…MNEYTGKAPV (316 aa)) is the PKS/mFAS DH domain. Histidine 952 serves as the catalytic Proton acceptor; for dehydratase activity. The tract at residues 1078-1235 (HEVWGMSRWY…MNEYTGKAPV (158 aa)) is C-terminal hotdog fold. The active-site Proton donor; for dehydratase activity is aspartate 1144. The interval 1639–1956 (GMTDTIHFQQ…NKDRVGKVVV (318 aa)) is enoyl reductase (ER) domain. The interval 1981–2159 (TYLLVGCLGG…AVSVGLGMIS (179 aa)) is ketoreductase (KR) domain. The 79-residue stretch at 2297–2375 (TMLDAILRLT…TLAEFIEEKL (79 aa)) folds into the Carrier domain. Serine 2334 carries the post-translational modification O-(pantetheine 4'-phosphoryl)serine.

The protein operates within secondary metabolite biosynthesis. Highly reducing polyketide synthase; part of the gene cluster that mediates the biosynthesis of virensols and trichoxide, fungal natural products that contain or are derived from a salicylaldehyde core. The pathway begins with the synthesis of the reduced chain in virensol C by the highly reducing polyketide synthase virA via condensation of one acetate and 8 malonate units. VirA has interesting programming rules since the first 2 ketides are fully reduced, the 3 following ketides undergo beta-dehydration, and the last 3 ketides are only reduced to beta-hydroxys to yield the trihydroxy portion. The production of aldehyde virensol C by virA alone is surprising, since virA does not contain a reductase (R) domain that is typically associated with reductive product release in HRPKS. The cupin-domain enzyme virC is involved in enhancing virA product turnover. The short-chain dehydrogenase virB then oxidizes the C-7 alcohol of virensol C to a ketone, yielding virensol D. Virensol D is further transformed to salicylaldehyde 5-deoxyaurocitrin by the short-chain dehydrogenase virD. VirD catalyzes the dehydrogenation of C-3 to form the beta-ketone aldehyde, which is followed by the generation of the nucleophilic C-2 that is required for the intramolecular aldol condensation between C-2 and C-7, itself followed by dehydration and aromatization which leads to salicylaldehyde 5-deoxyaurocitrin. While the dehydrogenation of virensol D is definitely catalyzed by virD, the aldol condensation and dehydration may be uncatalyzed or assisted by virD. The short chain dehydrogenase virG then converts salicylaldehyde 5-deoxyaurocitrin into virensol B which is further hydroxylated by the cytochrome P450 monooxygenase virE to yield the hydroquinone virensol A. VirI then may oxidize virensol A to form the quinone, while virH performs the epoxidation. Finally, the two remaining short-chain dehydrogenases, virK and virL, are probably responsible for reducing the ketones to the corresponding alcohols to furnish the epoxycyclohexanol structure in trichoxide. This is Highly reducing polyketide synthase virA from Hypocrea virens (strain Gv29-8 / FGSC 10586) (Gliocladium virens).